The following is a 106-amino-acid chain: MNFWATFSICLVGYLVYAGHLNNELQEIKSILVVMYESMEKHFSNVVDEIDSLKTDTFMMLSNLQNNTIRTWDAVVKNGKKISNLDEKINVLLTKNGVVNNVLNVQ.

In terms of processing, glycosylated.

The protein resides in the host cytoplasm. May be involved in formation or transport of the nucleocapsid-containing vesicles around the nuclear membrane. This is Glycoprotein GP16 (GP16) from Autographa californica nuclear polyhedrosis virus (AcMNPV).